The following is a 447-amino-acid chain: Na(+)-translocating NADH-quinone reductase subunit A (447 aa).

It belongs to the NqrA family. As to quaternary structure, composed of six subunits; NqrA, NqrB, NqrC, NqrD, NqrE and NqrF.

It catalyses the reaction a ubiquinone + n Na(+)(in) + NADH + H(+) = a ubiquinol + n Na(+)(out) + NAD(+). Functionally, NQR complex catalyzes the reduction of ubiquinone-1 to ubiquinol by two successive reactions, coupled with the transport of Na(+) ions from the cytoplasm to the periplasm. NqrA to NqrE are probably involved in the second step, the conversion of ubisemiquinone to ubiquinol. The protein is Na(+)-translocating NADH-quinone reductase subunit A of Neisseria gonorrhoeae (strain ATCC 700825 / FA 1090).